We begin with the raw amino-acid sequence, 504 residues long: Peroxisomal N(1)-acetyl-spermine/spermidine oxidase (504 aa).

FAD is bound by residues Ala16, Glu37, Arg45, and 61 to 62 (HW). His64 and Val187 together coordinate substrate. Val240 is an FAD binding site. Asn313 contacts substrate. FAD-binding positions include Glu465 and 474–475 (TT). Residues 502–504 (PRL) carry the Microbody targeting signal motif.

Belongs to the flavin monoamine oxidase family. As to quaternary structure, monomer. Requires FAD as cofactor. In terms of tissue distribution, widely expressed at different developmental stages. Expressed at high level in the liver and the stomach, expressed at lower level in heart, spleen, thymus, small intestine, muscle, pancreas, uterus, and breast and expressed at very low level in brain, kidney, lung, testis, skin, adrenal gland and prostate gland.

It is found in the peroxisome. It localises to the cytoplasm. The catalysed reaction is N(1)-acetylspermine + O2 + H2O = 3-acetamidopropanal + spermidine + H2O2. It carries out the reaction N(1)-acetylspermidine + O2 + H2O = 3-acetamidopropanal + putrescine + H2O2. It catalyses the reaction N(1),N(12)-diacetylspermine + O2 + H2O = 3-acetamidopropanal + N(1)-acetylspermidine + H2O2. The protein operates within amine and polyamine metabolism; spermine metabolism. Its function is as follows. Flavoenzyme which catalyzes the oxidation of N(1)-acetylspermine to spermidine and is thus involved in the polyamine back-conversion. Can also oxidize N(1)-acetylspermidine to putrescine. Substrate specificity: N(1)-acetylspermine = N(1)-acetylspermidine &gt; N(1),N(12)-diacylspermine &gt;&gt; spermine. Does not oxidize spermidine. Plays an important role in the regulation of polyamine intracellular concentration and has the potential to act as a determinant of cellular sensitivity to the antitumor polyamine analogs. The polypeptide is Peroxisomal N(1)-acetyl-spermine/spermidine oxidase (Paox) (Mus musculus (Mouse)).